Reading from the N-terminus, the 588-residue chain is Calcium/calmodulin-dependent protein kinase kinase 2 (588 aa).

Residues 1-11 (MSSCVSSQPTS) show a composition bias toward polar residues. 2 disordered regions span residues 1-34 (MSSCVSSQPTSDRVAPQDELGSGGGSREGQKPCE) and 64-147 (DLNL…PTVE). Ser2 bears the N-acetylserine mark. Ser99, Ser114, Ser129, Ser133, and Ser137 each carry phosphoserine. The span at 101–116 (QEPSQGGPASSSNSLD) shows a compositional bias: polar residues. The span at 124-139 (PSLSYSPASSPQSSPR) shows a compositional bias: low complexity. In terms of domain architecture, Protein kinase spans 165–446 (YTLKDEIGKG…VPEIKLHPWV (282 aa)). ATP contacts are provided by residues 171–179 (IGKGSYGVV) and Lys194. The tract at residues 204–226 (QAGFPRRPPPRGARPAPGGCIQP) is RP domain. Residues 205–225 (AGFPRRPPPRGARPAPGGCIQ) are disordered. Asp312 functions as the Proton acceptor in the catalytic mechanism. The segment at 472–477 (ENSVKH) is autoinhibitory domain. The segment at 475–500 (VKHIPSLATVILVKTMIRKRSFGNPF) is calmodulin-binding. 4 positions are modified to phosphoserine: Ser495, Ser511, Thr522, and Ser572. Positions 497-588 (GNPFEGSRRE…LQPEEVMEPE (92 aa)) are disordered. Basic and acidic residues predominate over residues 521-536 (PTREWEPLSEPKEARQ). Positions 570-580 (PGSPPRMPPLQ) are enriched in pro residues.

It belongs to the protein kinase superfamily. Ser/Thr protein kinase family. As to quaternary structure, interacts with calmodulin. In terms of processing, autophosphorylated and phosphorylated by PKA. Each isoform may show a different pattern of phosphorylation. In terms of tissue distribution, expressed in all tissues tested. A differential expression pattern compared to CAMKK1 is observed in the brain.

It is found in the nucleus. Its subcellular location is the cytoplasm. It localises to the cell projection. The protein localises to the neuron projection. It carries out the reaction L-seryl-[protein] + ATP = O-phospho-L-seryl-[protein] + ADP + H(+). The enzyme catalyses L-threonyl-[protein] + ATP = O-phospho-L-threonyl-[protein] + ADP + H(+). With respect to regulation, activated by Ca(2+)/calmodulin. Binding of calmodulin may relieve intrasteric autoinhibition. Autophosphorylation does not alter activity or regulation by Ca(2+)/calmodulin. In part, activity is independent on Ca(2+)/calmodulin. Functionally, calcium/calmodulin-dependent protein kinase belonging to a proposed calcium-triggered signaling cascade involved in a number of cellular processes. Phosphorylates CAMK1, CAMK4 and CAMK1D. Efficiently phosphorylates 5'-AMP-activated protein kinase (AMPK) trimer, including that consisting of PRKAA1, PRKAB1 and PRKAG1. This phosphorylation is stimulated in response to Ca(2+) signals. May play a role in neurite growth. Isoform 2 may promote neurite elongation, while isoform 1 may promoter neurite branching. May be involved in hippocampal activation of CREB1. This chain is Calcium/calmodulin-dependent protein kinase kinase 2 (Camkk2), found in Mus musculus (Mouse).